The primary structure comprises 177 residues: UPF0114 protein jhp_0175 (177 aa).

3 consecutive transmembrane segments (helical) span residues 15–35, 54–74, and 145–165; these read WLLA…GYVF, LVLS…VLMV, and PIFW…LTAV.

It belongs to the UPF0114 family.

Its subcellular location is the cell membrane. This chain is UPF0114 protein jhp_0175, found in Helicobacter pylori (strain J99 / ATCC 700824) (Campylobacter pylori J99).